Here is a 325-residue protein sequence, read N- to C-terminus: Malate dehydrogenase (325 aa).

An NAD(+)-binding site is contributed by Gly9–Gly15. Substrate contacts are provided by Arg90 and Arg96. NAD(+) contacts are provided by residues Asn103, Gln110, and Val127 to Asn129. Residues Asn129 and Arg160 each coordinate substrate. His185 serves as the catalytic Proton acceptor.

The protein belongs to the LDH/MDH superfamily. MDH type 2 family.

The catalysed reaction is (S)-malate + NAD(+) = oxaloacetate + NADH + H(+). Functionally, catalyzes the reversible oxidation of malate to oxaloacetate. The sequence is that of Malate dehydrogenase from Rubrobacter xylanophilus (strain DSM 9941 / JCM 11954 / NBRC 16129 / PRD-1).